The primary structure comprises 1033 residues: Ubiquitin carboxyl-terminal hydrolase 48 (1033 aa).

One can recognise a USP domain in the interval 89–419; the sequence is VGLTNLGATC…NAYMLVYRLQ (331 aa). C98 acts as the Nucleophile in catalysis. H351 serves as the catalytic Proton acceptor. DUSP domains are found at residues 457–552, 567–690, and 710–823; these read QSVA…KALC, NQLN…NKEC, and MMAS…RTRA. The disordered stretch occupies residues 610–639; the sequence is EQDEDAEHSNGKLNGNAPNKDEVNEEKREE. Residues 878 to 920 form a disordered region; the sequence is APELNVSSSEAEEEREENKPEGEQDPDFNQSNGGAKRQKLSHQ. One can recognise a Ubiquitin-like domain in the interval 931 to 1007; that stretch reads RRSTRHRKVR…ILLKADEPIA (77 aa).

It belongs to the peptidase C19 family.

The protein localises to the cytoplasm. The protein resides in the nucleus. The enzyme catalyses Thiol-dependent hydrolysis of ester, thioester, amide, peptide and isopeptide bonds formed by the C-terminal Gly of ubiquitin (a 76-residue protein attached to proteins as an intracellular targeting signal).. In terms of biological role, recognizes and hydrolyzes the peptide bond at the C-terminal Gly of ubiquitin. Involved in the processing of poly-ubiquitin precursors as well as that of ubiquitinated proteins. The polypeptide is Ubiquitin carboxyl-terminal hydrolase 48 (USP48) (Gallus gallus (Chicken)).